The following is a 326-amino-acid chain: Aspartate carbamoyltransferase catalytic subunit (326 aa).

The carbamoyl phosphate site is built by R60 and T61. Residue K88 participates in L-aspartate binding. R110, H143, and Q146 together coordinate carbamoyl phosphate. L-aspartate is bound by residues R183 and R239. Positions 280 and 281 each coordinate carbamoyl phosphate.

Belongs to the aspartate/ornithine carbamoyltransferase superfamily. ATCase family. In terms of assembly, heterododecamer (2C3:3R2) of six catalytic PyrB chains organized as two trimers (C3), and six regulatory PyrI chains organized as three dimers (R2).

It catalyses the reaction carbamoyl phosphate + L-aspartate = N-carbamoyl-L-aspartate + phosphate + H(+). The protein operates within pyrimidine metabolism; UMP biosynthesis via de novo pathway; (S)-dihydroorotate from bicarbonate: step 2/3. Catalyzes the condensation of carbamoyl phosphate and aspartate to form carbamoyl aspartate and inorganic phosphate, the committed step in the de novo pyrimidine nucleotide biosynthesis pathway. This Microcystis aeruginosa (strain NIES-843 / IAM M-2473) protein is Aspartate carbamoyltransferase catalytic subunit.